A 220-amino-acid polypeptide reads, in one-letter code: uncharacterized protein (220 aa).

An N-terminal signal peptide occupies residues 1-25 (MSCGTYKRGSLTFLLVVALAVPVFC).

As to expression, nacreous layer of shell (at protein level). Expressed primarily in the mantle with highest level in the mantle pallium and lower level in the mantle edge.

The protein localises to the secreted. This is an uncharacterized protein from Margaritifera margaritifera (Freshwater pearl mussel).